The sequence spans 134 residues: Retinoid-binding protein 7 (134 aa).

The protein belongs to the calycin superfamily. Fatty-acid binding protein (FABP) family. Highly expressed in white adipose tissue and mammary gland.

It is found in the cytoplasm. Functionally, intracellular transport of retinol. This chain is Retinoid-binding protein 7 (Rbp7), found in Mus musculus (Mouse).